The following is a 116-amino-acid chain: T cell receptor alpha variable 38-2/delta variable 8 (116 aa).

An N-terminal signal peptide occupies residues 1-21 (MACPGFLWALVISTCLEFSMA). Residues 22–116 (QTVTQSQPEM…AAMYFCAYRS (95 aa)) enclose the Ig-like domain. Residues C43 and C112 are joined by a disulfide bond. A glycan (N-linked (GlcNAc...) asparagine) is linked at N78.

As to quaternary structure, alpha-beta TR is a heterodimer composed of an alpha and beta chain; disulfide-linked. The alpha-beta TR is associated with the transmembrane signaling CD3 coreceptor proteins to form the TR-CD3 (TcR or TCR). The assembly of alpha-beta TR heterodimers with CD3 occurs in the endoplasmic reticulum where a single alpha-beta TR heterodimer associates with one CD3D-CD3E heterodimer, one CD3G-CD3E heterodimer and one CD247 homodimer forming a stable octameric structure. CD3D-CD3E and CD3G-CD3E heterodimers preferentially associate with TR alpha and TR beta chains, respectively. The association of the CD247 homodimer is the last step of TcR assembly in the endoplasmic reticulum and is required for transport to the cell surface.

Its subcellular location is the cell membrane. In terms of biological role, v region of the variable domain of T cell receptor (TR) alpha chain that participates in the antigen recognition. Alpha-beta T cell receptors are antigen specific receptors which are essential to the immune response and are present on the cell surface of T lymphocytes. Recognize peptide-major histocompatibility (MH) (pMH) complexes that are displayed by antigen presenting cells (APC), a prerequisite for efficient T cell adaptive immunity against pathogens. Binding of alpha-beta TR to pMH complex initiates TR-CD3 clustering on the cell surface and intracellular activation of LCK that phosphorylates the ITAM motifs of CD3G, CD3D, CD3E and CD247 enabling the recruitment of ZAP70. In turn ZAP70 phosphorylates LAT, which recruits numerous signaling molecules to form the LAT signalosome. The LAT signalosome propagates signal branching to three major signaling pathways, the calcium, the mitogen-activated protein kinase (MAPK) kinase and the nuclear factor NF-kappa-B (NF-kB) pathways, leading to the mobilization of transcription factors that are critical for gene expression and essential for T cell growth and differentiation. The T cell repertoire is generated in the thymus, by V-(D)-J rearrangement. This repertoire is then shaped by intrathymic selection events to generate a peripheral T cell pool of self-MH restricted, non-autoaggressive T cells. Post-thymic interaction of alpha-beta TR with the pMH complexes shapes TR structural and functional avidity. This chain is T cell receptor alpha variable 38-2/delta variable 8, found in Homo sapiens (Human).